We begin with the raw amino-acid sequence, 522 residues long: Coiled-coil domain-containing protein 149-B (522 aa).

Coiled-coil stretches lie at residues 1–196 and 260–287; these read MANQ…LESK and IRHQ…LEVS. Residues 413–522 form a disordered region; sequence ACTAERSEQH…TSPHQECPSS (110 aa). 3 stretches are compositionally biased toward polar residues: residues 429-438, 467-490, and 503-522; these read GGHQSMSTEA, QPVT…TAEQ, and ASLN…CPSS.

Belongs to the CCDC149 family.

In Danio rerio (Zebrafish), this protein is Coiled-coil domain-containing protein 149-B (ccdc149b).